The sequence spans 263 residues: Complement control protein C3 (263 aa).

The first 19 residues, Met-1–Ser-19, serve as a signal peptide directing secretion. Sushi domains are found at residues Cys-20–Lys-83, Arg-84–Ser-145, Val-146–Ile-203, and Val-204–Arg-263. Disulfide bonds link Cys-21–Cys-70, Cys-54–Cys-81, Cys-86–Cys-126, Cys-112–Cys-143, Cys-148–Cys-190, Cys-176–Cys-201, Cys-206–Cys-248, and Cys-234–Cys-261.

This sequence belongs to the receptors of complement activation (RCA) family. In terms of assembly, heterodimer with A56 protein; disulfide-linked.

It localises to the virion membrane. The protein resides in the host cell membrane. The protein localises to the secreted. Serves to protect the virus against complement attack by inhibiting both classical and alternative pathways of complement activation. Binds C3b and C4b. In Vaccinia virus (strain Copenhagen) (VACV), this protein is Complement control protein C3.